Reading from the N-terminus, the 101-residue chain is Apolipoprotein C-II (101 aa).

The N-terminal stretch at 1 to 22 (MGTRFLLALFLVLLVLGFEVQG) is a signal peptide. The lipid binding stretch occupies residues 66 to 74 (TVDEKLRDM). The tract at residues 78–101 (STAAMSTYAGILTDQVLSMLKGEE) is lipoprotein lipase cofactor.

This sequence belongs to the apolipoprotein C2 family. Proapolipoprotein C-II is synthesized as a sialic acid containing glycoprotein which is subsequently desialylated prior to its proteolytic processing. In terms of processing, proapolipoprotein C-II, the major form found in plasma undergoes proteolytic cleavage of its N-terminal hexapeptide to generate apolipoprotein C-II, which occurs as the minor form in plasma.

Its subcellular location is the secreted. Component of chylomicrons, very low-density lipoproteins (VLDL), low-density lipoproteins (LDL), and high-density lipoproteins (HDL) in plasma. Plays an important role in lipoprotein metabolism as an activator of lipoprotein lipase. Both proapolipoprotein C-II and apolipoprotein C-II can activate lipoprotein lipase. This Aotus nancymaae (Ma's night monkey) protein is Apolipoprotein C-II (APOC2).